The sequence spans 1055 residues: Ubiquitin carboxyl-terminal hydrolase 25 (1055 aa).

The region spanning 14-57 is the UBA-like domain; sequence QKHQQTFLNQLREITGINDTQILQQALKDSNGNLELAVAFLTAK. Residues 77 to 102 form an SUMO interaction domain (SIM) region; that stretch reads NDRYISVGSQADTNVIDLTGDDKDDL. A Phosphoserine modification is found at Ser85. Residues 89–95 carry the Required for SUMO paralog-specific binding motif; it reads TNVIDLT. UIM domains follow at residues 97–116 and 123–140; these read DDKD…SNRA and TDEE…IAEN. Residue Lys99 forms a Glycyl lysine isopeptide (Lys-Gly) (interchain with G-Cter in SUMO); alternate linkage. A Glycyl lysine isopeptide (Lys-Gly) (interchain with G-Cter in ubiquitin); alternate cross-link involves residue Lys99. The region spanning 169–657 is the USP domain; it reads VGLKNVGNTC…SAYCLMYIND (489 aa). Residue Cys178 is part of the active site. The tract at residues 464–507 is disordered; the sequence is VCTSPVDDIDASSPPSGSIPSQTLPSTTEQQGALSSELPSTSPS. A compositionally biased stretch (polar residues) spans 476 to 496; it reads SPPSGSIPSQTLPSTTEQQGA. The span at 497-507 shows a compositional bias: low complexity; the sequence is LSSELPSTSPS. Positions 541–578 form a coiled coil; the sequence is TEEELSVLESCLHRWRTEIENDTRDLQESISRIHRTIE. Residues His599 and His607 contribute to the active site. Positions 684 to 717 form a coiled coil; it reads DLRDFVEEDNQRFEKELEEWDAQLAQKALQEKLL. Residues 727–749 form a disordered region; sequence TSVTTAQAAGDPEYLEQPSRSDF. Tyr740 bears the Phosphotyrosine mark.

This sequence belongs to the peptidase C19 family. In terms of assembly, homotetramer, inhibited form. Homodimer, active form. Interacts with ACTA1 (via its C-terminus); the interaction occurs for all isoforms but is strongest for isoform USP25m in muscle differentiating cells. Interacts (isoform USP25m only) with MYBPC1; the interaction prevents proteasomal degradation of MYBPC1. Interacts (isoform USP25m only) with FLNC (via filament repeats 17-18, 20-21 and 24). Interacts with GAPDH. Interacts with SUMO3; the interaction sumoylates efficiently USP25. Interacts with SUMO2; the interaction sumoylates efficiently USP25. Interacts with SUMO1; the interaction only weakly sumoylates USP25. Interacts with SYK; phosphorylates USP25 and regulates USP25 intracellular levels. Acetylated. Post-translationally, sumoylation impairs binding to and hydrolysis of ubiquitin chains. Sumoylated preferentially with SUMO2 or SUMO3. Desumoylated by SENP1. Polyubiquitinated by SMURF1 by promoting the 'Lys-48'-linkage leading to proteasomal degradation. In terms of processing, preferentially monoubiquitinated but can also be polyubiquitinated. Autodeubiquitinated. Ubiquitination activates the enzymatic activity either by preventing sumoylation or by allowing novel interactions. Phosphorylation in the C-terminal by SYK regulates USP25 cellular levels. Isoform USP25a is found in most adult and fetal tissues; expression is moderately high in testis, pancreas, kidney, skeletal muscle, liver, lung, placenta, heart, but very low in peripheral blood, colon, small intestine, ovary, prostate, thymus and spleen. Expressed in the brain, with high levels in the cerebral cortex. Isoform USP25b is found in all tissues except heart and skeletal muscle. Isoform USP25m is heart and skeletal muscle specific.

It localises to the cytoplasm. It is found in the nucleus. It carries out the reaction Thiol-dependent hydrolysis of ester, thioester, amide, peptide and isopeptide bonds formed by the C-terminal Gly of ubiquitin (a 76-residue protein attached to proteins as an intracellular targeting signal).. Its function is as follows. Deubiquitinating enzyme that hydrolyzes ubiquitin moieties conjugated to substrates and thus, functions in various biological processes including inflammation and immune response. Modulates the Wnt/beta-catenin pathway by deubiquitinating and stabilizing tankyrases TNKS1 and TNKS2. Regulates KEAP1-NRF2 axis in the defense against oxidative assaults by deubiquitinating KEAP1 and protecting it from degradation leading to degradation of the NRF2 transcription factor that is responsible for mounting an anti-oxidation gene expression program. Positively regulates RNA virus-induced innate signaling by interacting with and deubiquitinating ERLIN1 and ERLIN2. In turn, restricts virus production by regulating cholesterol biosynthetic flux. Acts as a negative regulator of interleukin-17-mediated signaling and inflammation through the removal of 'Lys-63'-linked ubiquitination of TRAF5 and TRAF6. Prevents the ubiquitination and degradation of TRAF3 to reduce the phosphorylation levels of JNK and P38, the secretion of IL-1B and to induce endotoxin tolerance. The muscle-specific isoform (USP25m) may have a role in the regulation of muscular differentiation and function. The polypeptide is Ubiquitin carboxyl-terminal hydrolase 25 (USP25) (Homo sapiens (Human)).